The sequence spans 264 residues: ATP synthase subunit a (264 aa).

Helical transmembrane passes span Thr29–Phe49, Ile90–Ile110, Asp134–Ile154, Ile177–Leu197, Leu208–Val228, and Leu235–Val255.

Belongs to the ATPase A chain family. In terms of assembly, F-type ATPases have 2 components, CF(1) - the catalytic core - and CF(0) - the membrane proton channel. CF(1) has five subunits: alpha(3), beta(3), gamma(1), delta(1), epsilon(1). CF(0) has three main subunits: a(1), b(2) and c(9-12). The alpha and beta chains form an alternating ring which encloses part of the gamma chain. CF(1) is attached to CF(0) by a central stalk formed by the gamma and epsilon chains, while a peripheral stalk is formed by the delta and b chains.

It localises to the cell inner membrane. Key component of the proton channel; it plays a direct role in the translocation of protons across the membrane. This chain is ATP synthase subunit a, found in Shewanella loihica (strain ATCC BAA-1088 / PV-4).